The sequence spans 311 residues: Methionyl-tRNA formyltransferase (311 aa).

112–115 (SLLP) contributes to the (6S)-5,6,7,8-tetrahydrofolate binding site.

The protein belongs to the Fmt family.

The catalysed reaction is L-methionyl-tRNA(fMet) + (6R)-10-formyltetrahydrofolate = N-formyl-L-methionyl-tRNA(fMet) + (6S)-5,6,7,8-tetrahydrofolate + H(+). Its function is as follows. Attaches a formyl group to the free amino group of methionyl-tRNA(fMet). The formyl group appears to play a dual role in the initiator identity of N-formylmethionyl-tRNA by promoting its recognition by IF2 and preventing the misappropriation of this tRNA by the elongation apparatus. The polypeptide is Methionyl-tRNA formyltransferase (Bradyrhizobium diazoefficiens (strain JCM 10833 / BCRC 13528 / IAM 13628 / NBRC 14792 / USDA 110)).